The primary structure comprises 201 residues: Recombination protein RecR (201 aa).

The C4-type zinc finger occupies 57–72 (CADCRTFTEQEVCNIC). The 96-residue stretch at 81 to 176 (GQICVVESPA…EASRIAHGVP (96 aa)) folds into the Toprim domain.

It belongs to the RecR family.

May play a role in DNA repair. It seems to be involved in an RecBC-independent recombinational process of DNA repair. It may act with RecF and RecO. The polypeptide is Recombination protein RecR (Shigella boydii serotype 18 (strain CDC 3083-94 / BS512)).